The primary structure comprises 258 residues: GTP cyclohydrolase FolE2 (258 aa).

It belongs to the GTP cyclohydrolase IV family.

The enzyme catalyses GTP + H2O = 7,8-dihydroneopterin 3'-triphosphate + formate + H(+). It functions in the pathway cofactor biosynthesis; 7,8-dihydroneopterin triphosphate biosynthesis; 7,8-dihydroneopterin triphosphate from GTP: step 1/1. Converts GTP to 7,8-dihydroneopterin triphosphate. This is GTP cyclohydrolase FolE2 from Lawsonia intracellularis (strain PHE/MN1-00).